Here is a 313-residue protein sequence, read N- to C-terminus: MAVASSTRPSQKQSTSKLQPWIQLTRVRKFAGTMVLFWPFAWGLTMAARALLLPVQTFGTILACGFFASCLLHSAGCIWNDILDQDFDRQVERTKSRPIASGAISNTGALIFMFAHLFILMGMIWTSNSLAWMIGIISIFPLPGIYPLMKRITYWPQAWLGIALNTGIVMAWAYTTGTYPTSSIVLSVGAWAWTIYYDTIYACQDKKDDINAGVKSTALLFGSYIKPVLSLFGSIIVGSLLISGILNNQELPYFLVSVGGGGLHLATQLWQVDLDTPKSCWNAFHSTAFNFGAIVWAGLLLDYAWAVGVGAIM.

2 consecutive transmembrane segments (helical) span residues F30 to L52 and T57 to W79. The NDxxDxxxD motif lies at D81–D88. Mg(2+)-binding residues include D84 and D88. 3 helical membrane passes run I99 to M121, A131 to L148, and W155 to G177. 2 residues coordinate Mg(2+): D205 and D209. Positions D205–D209 match the DxxxD motif. Positions D205–D209 match the YxxxK motif. The next 3 helical transmembrane spans lie at P227 to N247, E250 to W270, and A293 to M313.

This sequence belongs to the UbiA prenyltransferase family. Mg(2+) serves as cofactor.

The protein localises to the membrane. The catalysed reaction is hydroquinone + (2E)-geranyl diphosphate = (2E)-geranylhydroquinone + diphosphate. Its pathway is secondary metabolite biosynthesis; terpenoid biosynthesis. Functionally, prenyltransferase; part of the gene cluster that mediates the biosynthesis of clavilactone A, a meroterpenoid that features a unique benzo-fused ten-membered carbocyclic ring unit with an alpha,beta-epoxy-gamma-lactone moiety, forming an intriguing 10/5/3 tricyclic nested skeleton. ClaR, ClaS and ClaT are sufficient to produce clavilactone A. Within the pathway, claS acts as an atypical UbiA prenyltransferase that transfers geranyl pyrophosphate (GPP) to hydroquinone (HYQ) instead of p-hydroxybenzoic acid (PHB), producing the first intermediate geranylhydroquinone. The cytochrome P450 monooxygenase claR then catalyzes the diradical coupling reaction between the intramolecular hydroquinone and allyl moieties to form the benzo-fused ten-membered carbocyclic ring unit of wigantol. Finally the cytochrome P450 monooxygenase claT exquisitely and stereoselectively assembles the alpha,beta-epoxy-gamma-lactone moiety, producing clavilactone A via arnebinol A. This is UbiA prenyltransferase claS from Ampulloclitocybe clavipes (Club foot).